The following is a 1578-amino-acid chain: Pentafunctional AROM polypeptide (1578 aa).

The tract at residues 1–384 (MTGPTKISIL…YEPRASVVPN (384 aa)) is 3-dehydroquinate synthase. Residues 44–46 (DTN), 81–84 (EVSK), 114–116 (GGV), and aspartate 119 each bind NAD(+). Arginine 130 serves as a coordination point for 7-phospho-2-dehydro-3-deoxy-D-arabino-heptonate. 139–140 (TT) contacts NAD(+). 7-phospho-2-dehydro-3-deoxy-D-arabino-heptonate contacts are provided by aspartate 146 and lysine 152. Position 161 (lysine 161) interacts with NAD(+). Asparagine 162 contributes to the 7-phospho-2-dehydro-3-deoxy-D-arabino-heptonate binding site. Residues 179–182 (FLET) and asparagine 190 each bind NAD(+). Residue glutamate 194 coordinates Zn(2+). Residues 194 to 197 (EVIK) and lysine 250 each bind 7-phospho-2-dehydro-3-deoxy-D-arabino-heptonate. Catalysis depends on glutamate 260, which acts as the Proton acceptor; for 3-dehydroquinate synthase activity. Residues 264–268 (RNLLN) and histidine 271 each bind 7-phospho-2-dehydro-3-deoxy-D-arabino-heptonate. Histidine 271 provides a ligand contact to Zn(2+). Histidine 275 (proton acceptor; for 3-dehydroquinate synthase activity) is an active-site residue. Positions 287 and 356 each coordinate 7-phospho-2-dehydro-3-deoxy-D-arabino-heptonate. Histidine 287 provides a ligand contact to Zn(2+). The segment at 397-842 (VYPGVSPASE…WDTLRQKFAV (446 aa)) is EPSP synthase. Residue cysteine 824 is the For EPSP synthase activity of the active site. The segment at 864-1055 (SASVFIIGMR…KKKQHSFFVS (192 aa)) is shikimate kinase. 871–878 (GMRGAGKT) is an ATP binding site. The 3-dehydroquinase stretch occupies residues 1056 to 1276 (LTLPDVRGAD…AAPGQLSATD (221 aa)). Residue histidine 1179 is the Proton acceptor; for 3-dehydroquinate dehydratase activity of the active site. Catalysis depends on lysine 1207, which acts as the Schiff-base intermediate with substrate; for 3-dehydroquinate dehydratase activity. The shikimate dehydrogenase stretch occupies residues 1289–1578 (KKRFALFGSP…YERARAIVLG (290 aa)).

In the N-terminal section; belongs to the sugar phosphate cyclases superfamily. Dehydroquinate synthase family. The protein in the 2nd section; belongs to the EPSP synthase family. This sequence in the 3rd section; belongs to the shikimate kinase family. It in the 4th section; belongs to the type-I 3-dehydroquinase family. In the C-terminal section; belongs to the shikimate dehydrogenase family. In terms of assembly, homodimer. Requires Zn(2+) as cofactor.

It localises to the cytoplasm. It carries out the reaction 7-phospho-2-dehydro-3-deoxy-D-arabino-heptonate = 3-dehydroquinate + phosphate. The enzyme catalyses 3-dehydroquinate = 3-dehydroshikimate + H2O. The catalysed reaction is shikimate + NADP(+) = 3-dehydroshikimate + NADPH + H(+). It catalyses the reaction shikimate + ATP = 3-phosphoshikimate + ADP + H(+). It carries out the reaction 3-phosphoshikimate + phosphoenolpyruvate = 5-O-(1-carboxyvinyl)-3-phosphoshikimate + phosphate. It participates in metabolic intermediate biosynthesis; chorismate biosynthesis; chorismate from D-erythrose 4-phosphate and phosphoenolpyruvate: step 2/7. Its pathway is metabolic intermediate biosynthesis; chorismate biosynthesis; chorismate from D-erythrose 4-phosphate and phosphoenolpyruvate: step 3/7. It functions in the pathway metabolic intermediate biosynthesis; chorismate biosynthesis; chorismate from D-erythrose 4-phosphate and phosphoenolpyruvate: step 4/7. The protein operates within metabolic intermediate biosynthesis; chorismate biosynthesis; chorismate from D-erythrose 4-phosphate and phosphoenolpyruvate: step 5/7. It participates in metabolic intermediate biosynthesis; chorismate biosynthesis; chorismate from D-erythrose 4-phosphate and phosphoenolpyruvate: step 6/7. Its function is as follows. The AROM polypeptide catalyzes 5 consecutive enzymatic reactions in prechorismate polyaromatic amino acid biosynthesis. The protein is Pentafunctional AROM polypeptide of Neosartorya fischeri (strain ATCC 1020 / DSM 3700 / CBS 544.65 / FGSC A1164 / JCM 1740 / NRRL 181 / WB 181) (Aspergillus fischerianus).